The primary structure comprises 92 residues: Cell division protein FtsB (92 aa).

The Cytoplasmic segment spans residues 1 to 3; sequence MRL. Residues 4-21 traverse the membrane as a helical segment; it reads LILILLSVLVLFQYNFWF. Residues 22-92 lie on the Periplasmic side of the membrane; it reads GSNGFLDYRQ…VFYHIVKESK (71 aa). The stretch at 28–63 forms a coiled coil; that stretch reads DYRQNAEKIKENQAENEKLSQRNQRINAEIQGLTKG.

It belongs to the FtsB family. In terms of assembly, part of a complex composed of FtsB, FtsL and FtsQ.

The protein localises to the cell inner membrane. In terms of biological role, essential cell division protein. May link together the upstream cell division proteins, which are predominantly cytoplasmic, with the downstream cell division proteins, which are predominantly periplasmic. This Haemophilus influenzae (strain 86-028NP) protein is Cell division protein FtsB.